The sequence spans 139 residues: Arsenate reductase (139 aa).

Active-site nucleophile residues include cysteine 10, cysteine 82, and cysteine 89. Disulfide bonds link cysteine 10–cysteine 82 and cysteine 82–cysteine 89.

The protein belongs to the low molecular weight phosphotyrosine protein phosphatase family. Thioredoxin-coupled ArsC subfamily.

It is found in the cytoplasm. It carries out the reaction arsenate + [thioredoxin]-dithiol + H(+) = arsenite + [thioredoxin]-disulfide + H2O. Catalyzes the reduction of arsenate [As(V)] to arsenite [As(III)]. This is Arsenate reductase from Bacillus licheniformis (strain ATCC 14580 / DSM 13 / JCM 2505 / CCUG 7422 / NBRC 12200 / NCIMB 9375 / NCTC 10341 / NRRL NRS-1264 / Gibson 46).